Reading from the N-terminus, the 320-residue chain is Ferrochelatase (320 aa).

The Fe cation site is built by histidine 194 and glutamate 275.

The protein belongs to the ferrochelatase family. Monomer.

It localises to the cytoplasm. It catalyses the reaction heme b + 2 H(+) = protoporphyrin IX + Fe(2+). Its pathway is porphyrin-containing compound metabolism; protoheme biosynthesis; protoheme from protoporphyrin-IX: step 1/1. Catalyzes the ferrous insertion into protoporphyrin IX. This is Ferrochelatase from Shigella boydii serotype 4 (strain Sb227).